A 292-amino-acid chain; its full sequence is Diaminopimelate epimerase (292 aa).

The substrate site is built by Asn-14 and Asn-78. The active-site Proton donor is the Cys-87. Residues 88–89 (GN), Asn-164, Asn-197, and 221–222 (ER) contribute to the substrate site. Cys-230 acts as the Proton acceptor in catalysis. 231–232 (GT) provides a ligand contact to substrate.

This sequence belongs to the diaminopimelate epimerase family. In terms of assembly, homodimer.

The protein localises to the cytoplasm. The catalysed reaction is (2S,6S)-2,6-diaminopimelate = meso-2,6-diaminopimelate. It participates in amino-acid biosynthesis; L-lysine biosynthesis via DAP pathway; DL-2,6-diaminopimelate from LL-2,6-diaminopimelate: step 1/1. Its function is as follows. Catalyzes the stereoinversion of LL-2,6-diaminopimelate (L,L-DAP) to meso-diaminopimelate (meso-DAP), a precursor of L-lysine and an essential component of the bacterial peptidoglycan. The polypeptide is Diaminopimelate epimerase (Leifsonia xyli subsp. xyli (strain CTCB07)).